Consider the following 860-residue polypeptide: Beta-glucosidase A (860 aa).

Positions 1–19 (MRFTLIEAVALTAVSLASA) are cleaved as a signal peptide. Residues asparagine 61, asparagine 211, and asparagine 252 are each glycosylated (N-linked (GlcNAc...) asparagine). The active site involves aspartate 280. N-linked (GlcNAc...) asparagine glycans are attached at residues asparagine 315, asparagine 322, asparagine 354, asparagine 387, asparagine 442, asparagine 523, asparagine 542, asparagine 564, asparagine 658, asparagine 690, and asparagine 712. The interval 719 to 753 (SSGDASYGQDSSDYLPEGATDGSAQPILPAGGGPG) is disordered.

The protein belongs to the glycosyl hydrolase 3 family.

The protein resides in the secreted. The catalysed reaction is Hydrolysis of terminal, non-reducing beta-D-glucosyl residues with release of beta-D-glucose.. It functions in the pathway glycan metabolism; cellulose degradation. Functionally, beta-glucosidases are one of a number of cellulolytic enzymes involved in the degradation of cellulosic biomass. Catalyzes the last step releasing glucose from the inhibitory cellobiose. The polypeptide is Beta-glucosidase A (bglA) (Aspergillus kawachii (strain NBRC 4308) (White koji mold)).